Here is a 266-residue protein sequence, read N- to C-terminus: ATP synthase subunit a (266 aa).

5 helical membrane passes run 28-48 (SINV…LVIF), 88-108 (LIAP…MMDL), 141-161 (DVNI…FYSI), 206-226 (LFGN…LLPW), and 237-257 (AIFH…LTVV).

The protein belongs to the ATPase A chain family. F-type ATPases have 2 components, CF(1) - the catalytic core - and CF(0) - the membrane proton channel. CF(1) has five subunits: alpha(3), beta(3), gamma(1), delta(1), epsilon(1). CF(0) has three main subunits: a(1), b(2) and c(9-12). The alpha and beta chains form an alternating ring which encloses part of the gamma chain. CF(1) is attached to CF(0) by a central stalk formed by the gamma and epsilon chains, while a peripheral stalk is formed by the delta and b chains.

It localises to the cell inner membrane. Its function is as follows. Key component of the proton channel; it plays a direct role in the translocation of protons across the membrane. The chain is ATP synthase subunit a from Pectobacterium atrosepticum (strain SCRI 1043 / ATCC BAA-672) (Erwinia carotovora subsp. atroseptica).